The primary structure comprises 159 residues: Ecotin (159 aa).

A signal peptide spans 1 to 22 (MRPTPMTAILALSLAAAAPAMA). A disulfide bridge connects residues C68 and C105.

This sequence belongs to the protease inhibitor I11 (ecotin) family. In terms of assembly, homodimer.

It localises to the periplasm. General inhibitor of family S1 serine proteases. This chain is Ecotin, found in Pseudomonas putida (strain ATCC 700007 / DSM 6899 / JCM 31910 / BCRC 17059 / LMG 24140 / F1).